The primary structure comprises 488 residues: Protein nucleotidyltransferase YdiU (488 aa).

Residues G91, G93, R94, K114, D126, G127, R177, and R184 each coordinate ATP. The active-site Proton acceptor is D253. Mg(2+) is bound by residues N254 and D263. Residue D263 participates in ATP binding.

This sequence belongs to the SELO family. Mg(2+) is required as a cofactor. It depends on Mn(2+) as a cofactor.

The catalysed reaction is L-seryl-[protein] + ATP = 3-O-(5'-adenylyl)-L-seryl-[protein] + diphosphate. It carries out the reaction L-threonyl-[protein] + ATP = 3-O-(5'-adenylyl)-L-threonyl-[protein] + diphosphate. The enzyme catalyses L-tyrosyl-[protein] + ATP = O-(5'-adenylyl)-L-tyrosyl-[protein] + diphosphate. It catalyses the reaction L-histidyl-[protein] + UTP = N(tele)-(5'-uridylyl)-L-histidyl-[protein] + diphosphate. The catalysed reaction is L-seryl-[protein] + UTP = O-(5'-uridylyl)-L-seryl-[protein] + diphosphate. It carries out the reaction L-tyrosyl-[protein] + UTP = O-(5'-uridylyl)-L-tyrosyl-[protein] + diphosphate. Nucleotidyltransferase involved in the post-translational modification of proteins. It can catalyze the addition of adenosine monophosphate (AMP) or uridine monophosphate (UMP) to a protein, resulting in modifications known as AMPylation and UMPylation. In Bacillus thuringiensis subsp. konkukian (strain 97-27), this protein is Protein nucleotidyltransferase YdiU.